The chain runs to 344 residues: Heat-inducible transcription repressor HrcA (344 aa).

This sequence belongs to the HrcA family.

Its function is as follows. Negative regulator of class I heat shock genes (grpE-dnaK-dnaJ and groELS operons). Prevents heat-shock induction of these operons. This is Heat-inducible transcription repressor HrcA from Streptococcus equi subsp. zooepidemicus (strain H70).